Consider the following 547-residue polypeptide: Chaperonin GroEL (547 aa).

Residues 30-33, Lys-51, 87-91, Gly-414, 478-480, and Asp-494 contribute to the ATP site; these read TLGP, DGTTT, and NAA.

The protein belongs to the chaperonin (HSP60) family. As to quaternary structure, forms a cylinder of 14 subunits composed of two heptameric rings stacked back-to-back. Interacts with the co-chaperonin GroES.

The protein resides in the cytoplasm. The catalysed reaction is ATP + H2O + a folded polypeptide = ADP + phosphate + an unfolded polypeptide.. In terms of biological role, together with its co-chaperonin GroES, plays an essential role in assisting protein folding. The GroEL-GroES system forms a nano-cage that allows encapsulation of the non-native substrate proteins and provides a physical environment optimized to promote and accelerate protein folding. The sequence is that of Chaperonin GroEL from Klebsiella pneumoniae.